Reading from the N-terminus, the 353-residue chain is D-alanine--D-alanine ligase (353 aa).

The ATP-grasp domain occupies 141 to 349 (KAAFAAAGLP…LEELVSQLVI (209 aa)). ATP is bound at residue 176–231 (EAKLKYPCFVKPANLGSSVGISKAQNRNELLIGLDKAASLDRRIVVEQGVSARELE). Residues D302, E316, and N318 each coordinate Mg(2+).

It belongs to the D-alanine--D-alanine ligase family. Requires Mg(2+) as cofactor. The cofactor is Mn(2+).

It localises to the cytoplasm. It catalyses the reaction 2 D-alanine + ATP = D-alanyl-D-alanine + ADP + phosphate + H(+). The protein operates within cell wall biogenesis; peptidoglycan biosynthesis. Cell wall formation. This is D-alanine--D-alanine ligase from Prochlorococcus marinus (strain MIT 9313).